Reading from the N-terminus, the 82-residue chain is uncharacterized protein (82 aa).

Residues 29 to 38 (TATKSTSSGS) show a composition bias toward low complexity. Residues 29–64 (TATKSTSSGSVPSFFTESTSTPLNQSKTNTSTLNKS) are disordered. Over residues 39-50 (VPSFFTESTSTP) the composition is skewed to polar residues. The span at 51-64 (LNQSKTNTSTLNKS) shows a compositional bias: low complexity.

This is an uncharacterized protein from Dictyostelium discoideum (Social amoeba).